We begin with the raw amino-acid sequence, 655 residues long: UvrABC system protein B (655 aa).

In terms of domain architecture, Helicase ATP-binding spans 25-181; sequence DGINKGEKEQ…IRKLVFMQYE (157 aa). Position 38 to 45 (38 to 45) interacts with ATP; it reads GVTGSGKT. A Beta-hairpin motif is present at residues 91 to 114; that stretch reads YYDYYQPEAYVPRTDTFIDKESSV. The region spanning 428-590 is the Helicase C-terminal domain; it reads QVEDLLGEVK…IVPKTTKRAL (163 aa). The UVR domain occupies 615 to 650; sequence RLLISDLENDMKEAAAKLDFERAASLRDQIATLKGL.

This sequence belongs to the UvrB family. In terms of assembly, forms a heterotetramer with UvrA during the search for lesions. Interacts with UvrC in an incision complex.

It localises to the cytoplasm. Functionally, the UvrABC repair system catalyzes the recognition and processing of DNA lesions. A damage recognition complex composed of 2 UvrA and 2 UvrB subunits scans DNA for abnormalities. Upon binding of the UvrA(2)B(2) complex to a putative damaged site, the DNA wraps around one UvrB monomer. DNA wrap is dependent on ATP binding by UvrB and probably causes local melting of the DNA helix, facilitating insertion of UvrB beta-hairpin between the DNA strands. Then UvrB probes one DNA strand for the presence of a lesion. If a lesion is found the UvrA subunits dissociate and the UvrB-DNA preincision complex is formed. This complex is subsequently bound by UvrC and the second UvrB is released. If no lesion is found, the DNA wraps around the other UvrB subunit that will check the other stand for damage. In Methanobrevibacter smithii (strain ATCC 35061 / DSM 861 / OCM 144 / PS), this protein is UvrABC system protein B.